Here is a 326-residue protein sequence, read N- to C-terminus: ATP phosphoribosyltransferase regulatory subunit (326 aa).

Belongs to the class-II aminoacyl-tRNA synthetase family. HisZ subfamily. As to quaternary structure, heteromultimer composed of HisG and HisZ subunits.

It localises to the cytoplasm. The protein operates within amino-acid biosynthesis; L-histidine biosynthesis; L-histidine from 5-phospho-alpha-D-ribose 1-diphosphate: step 1/9. Required for the first step of histidine biosynthesis. May allow the feedback regulation of ATP phosphoribosyltransferase activity by histidine. The polypeptide is ATP phosphoribosyltransferase regulatory subunit (Streptococcus thermophilus (strain ATCC BAA-491 / LMD-9)).